Here is a 212-residue protein sequence, read N- to C-terminus: uncharacterized protein (212 aa).

A signal peptide spans 1-21; sequence MRRLTAFGLALLLLASGVARG.

To E.coli YfaT and T.maritima TM0986.

This is an uncharacterized protein from Pseudomonas aeruginosa (strain ATCC 15692 / DSM 22644 / CIP 104116 / JCM 14847 / LMG 12228 / 1C / PRS 101 / PAO1).